The following is a 343-amino-acid chain: MEKIDLLSLTLKEIEEILTNMGEKKFRGKQIFQWVNKGVKTFDEMTNLSKNLRDQLAERTYITNIKIEKKLISSIDGTIKYLFLLEDCNIIEGVVMKYHHGLTACISTQVGCAMGCTFCASTLDGLVRNLRAGEMIDQILTMQEDTGERISNIVLMGSGEPLHNYDETINFLKIINDENGLNIGNRHITLSTSGLVPQIKTLADLKIPINLAISLHAPNDELRQQTMPVAKKYAIDELIDSCRYYIEKTGRRITFEYALIKGVNDRDKDARELGDLLKGMLCHVNLIPVNNVDERGYKKPSIESIHQFQNTLKKAGIETTVRREMGADINAACGQLRRKHLQN.

Glutamate 92 serves as the catalytic Proton acceptor. The 231-residue stretch at 98 to 328 (YHHGLTACIS…TTVRREMGAD (231 aa)) folds into the Radical SAM core domain. Cysteine 105 and cysteine 333 are oxidised to a cystine. The [4Fe-4S] cluster site is built by cysteine 112, cysteine 116, and cysteine 119. S-adenosyl-L-methionine-binding positions include 159–160 (GE), serine 191, 214–216 (SLH), and asparagine 290. Cysteine 333 (S-methylcysteine intermediate) is an active-site residue.

This sequence belongs to the radical SAM superfamily. RlmN family. It depends on [4Fe-4S] cluster as a cofactor.

The protein localises to the cytoplasm. The catalysed reaction is adenosine(2503) in 23S rRNA + 2 reduced [2Fe-2S]-[ferredoxin] + 2 S-adenosyl-L-methionine = 2-methyladenosine(2503) in 23S rRNA + 5'-deoxyadenosine + L-methionine + 2 oxidized [2Fe-2S]-[ferredoxin] + S-adenosyl-L-homocysteine. It carries out the reaction adenosine(37) in tRNA + 2 reduced [2Fe-2S]-[ferredoxin] + 2 S-adenosyl-L-methionine = 2-methyladenosine(37) in tRNA + 5'-deoxyadenosine + L-methionine + 2 oxidized [2Fe-2S]-[ferredoxin] + S-adenosyl-L-homocysteine. In terms of biological role, specifically methylates position 2 of adenine 2503 in 23S rRNA and position 2 of adenine 37 in tRNAs. This chain is Probable dual-specificity RNA methyltransferase RlmN, found in Alkaliphilus oremlandii (strain OhILAs) (Clostridium oremlandii (strain OhILAs)).